Reading from the N-terminus, the 833-residue chain is Kinesin-like protein KIFC3 (833 aa).

Residues 19–74 form a disordered region; that stretch reads LWRVGRAPEPEPGMARPAPAPASPAARPFPHTGPGRLRTGRGKDTPVCGDEDSSAR. Residues 30 to 48 show a composition bias toward low complexity; sequence PGMARPAPAPASPAARPFP. Coiled-coil stretches lie at residues 102–362 and 395–432; these read LTLQ…ENLA and LLQE…LQLR. The Kinesin motor domain maps to 445-768; the sequence is NIRVIARVRP…LKFAERVRSV (324 aa). 528 to 535 is an ATP binding site; it reads GQTGAGKT. The segment at 786-833 is disordered; that stretch reads EHLEWEPACQTPQPSARAHSAPSSGTSSRPGSIRRKLQPSGKSRPLPV. Over residues 806 to 815 the composition is skewed to polar residues; sequence APSSGTSSRP. 2 positions are modified to phosphoserine: Ser813 and Ser817.

It belongs to the TRAFAC class myosin-kinesin ATPase superfamily. Kinesin family.

The protein localises to the cell junction. The protein resides in the adherens junction. It is found in the cytoplasm. It localises to the cytoskeleton. Its subcellular location is the microtubule organizing center. The protein localises to the centrosome. The protein resides in the cytoplasmic vesicle membrane. Its function is as follows. Minus-end microtubule-dependent motor protein. Involved in apically targeted transport. Required for zonula adherens maintenance. The protein is Kinesin-like protein KIFC3 (KIFC3) of Homo sapiens (Human).